The sequence spans 176 residues: NAD(P)H-quinone oxidoreductase subunit 6, chloroplastic (176 aa).

A run of 5 helical transmembrane segments spans residues 10–30 (FLLV…VLLA), 32–52 (PIYS…FYIL), 61–81 (AQLL…VMFI), 92–112 (LWTV…VSLI), and 152–172 (FFIP…GAIA).

The protein belongs to the complex I subunit 6 family. In terms of assembly, NDH is composed of at least 16 different subunits, 5 of which are encoded in the nucleus.

It is found in the plastid. The protein localises to the chloroplast thylakoid membrane. The enzyme catalyses a plastoquinone + NADH + (n+1) H(+)(in) = a plastoquinol + NAD(+) + n H(+)(out). The catalysed reaction is a plastoquinone + NADPH + (n+1) H(+)(in) = a plastoquinol + NADP(+) + n H(+)(out). Functionally, NDH shuttles electrons from NAD(P)H:plastoquinone, via FMN and iron-sulfur (Fe-S) centers, to quinones in the photosynthetic chain and possibly in a chloroplast respiratory chain. The immediate electron acceptor for the enzyme in this species is believed to be plastoquinone. Couples the redox reaction to proton translocation, and thus conserves the redox energy in a proton gradient. The polypeptide is NAD(P)H-quinone oxidoreductase subunit 6, chloroplastic (ndhG) (Helianthus annuus (Common sunflower)).